The sequence spans 486 residues: tRNA sulfurtransferase (486 aa).

Residues 60–166 (QKICAMLINI…DNQLFIIIKR (107 aa)) form the THUMP domain. Residues 184–185 (LI), K266, G288, and Q297 contribute to the ATP site. Cysteines 345 and 458 form a disulfide. Residues 406 to 484 (LDSTDVVLDI…GFSNVKIYRP (79 aa)) form the Rhodanese domain. C458 (cysteine persulfide intermediate) is an active-site residue.

Belongs to the ThiI family.

The protein resides in the cytoplasm. The catalysed reaction is [ThiI sulfur-carrier protein]-S-sulfanyl-L-cysteine + a uridine in tRNA + 2 reduced [2Fe-2S]-[ferredoxin] + ATP + H(+) = [ThiI sulfur-carrier protein]-L-cysteine + a 4-thiouridine in tRNA + 2 oxidized [2Fe-2S]-[ferredoxin] + AMP + diphosphate. The enzyme catalyses [ThiS sulfur-carrier protein]-C-terminal Gly-Gly-AMP + S-sulfanyl-L-cysteinyl-[cysteine desulfurase] + AH2 = [ThiS sulfur-carrier protein]-C-terminal-Gly-aminoethanethioate + L-cysteinyl-[cysteine desulfurase] + A + AMP + 2 H(+). Its pathway is cofactor biosynthesis; thiamine diphosphate biosynthesis. In terms of biological role, catalyzes the ATP-dependent transfer of a sulfur to tRNA to produce 4-thiouridine in position 8 of tRNAs, which functions as a near-UV photosensor. Also catalyzes the transfer of sulfur to the sulfur carrier protein ThiS, forming ThiS-thiocarboxylate. This is a step in the synthesis of thiazole, in the thiamine biosynthesis pathway. The sulfur is donated as persulfide by IscS. The chain is tRNA sulfurtransferase from Blochmanniella pennsylvanica (strain BPEN).